Here is a 778-residue protein sequence, read N- to C-terminus: Ribonucleoside-diphosphate reductase large subunit (778 aa).

Substrate-binding positions include Ser-177, Ser-192–Cys-193, Gly-221, Asn-419–Glu-423, and Pro-613–Ser-617. Cysteines 193 and 439 form a disulfide. Asn-419 serves as the catalytic Proton acceptor. The active-site Cysteine radical intermediate is the Cys-421. Glu-423 (proton acceptor) is an active-site residue.

The protein belongs to the ribonucleoside diphosphate reductase large chain family. As to quaternary structure, heterotetramer composed of a homodimer of the large subunit (R1) and a homodimer of the small subunit (R2). Larger multisubunit protein complex are also active, composed of (R1)n(R2)n.

The enzyme catalyses a 2'-deoxyribonucleoside 5'-diphosphate + [thioredoxin]-disulfide + H2O = a ribonucleoside 5'-diphosphate + [thioredoxin]-dithiol. Its activity is regulated as follows. Under complex allosteric control mediated by deoxynucleoside triphosphates and ATP binding. The type of nucleotide bound at the specificity site determines substrate preference. It seems probable that ATP makes the enzyme reduce CDP and UDP, dGTP favors ADP reduction and dTTP favors GDP reduction. Functionally, ribonucleoside-diphosphate reductase holoenzyme provides the precursors necessary for viral DNA synthesis. Allows virus growth in non-dividing cells. Catalyzes the biosynthesis of deoxyribonucleotides from the corresponding ribonucleotides. In Ornithodoros (relapsing fever ticks), this protein is Ribonucleoside-diphosphate reductase large subunit.